Reading from the N-terminus, the 359-residue chain is tRNA/tmRNA (uracil-C(5))-methyltransferase (359 aa).

5 residues coordinate S-adenosyl-L-methionine: glutamine 183, tyrosine 211, asparagine 216, glutamate 232, and aspartate 292. Catalysis depends on cysteine 317, which acts as the Nucleophile. Catalysis depends on glutamate 351, which acts as the Proton acceptor.

The protein belongs to the class I-like SAM-binding methyltransferase superfamily. RNA M5U methyltransferase family. TrmA subfamily.

The enzyme catalyses uridine(54) in tRNA + S-adenosyl-L-methionine = 5-methyluridine(54) in tRNA + S-adenosyl-L-homocysteine + H(+). It catalyses the reaction uridine(341) in tmRNA + S-adenosyl-L-methionine = 5-methyluridine(341) in tmRNA + S-adenosyl-L-homocysteine + H(+). Its function is as follows. Dual-specificity methyltransferase that catalyzes the formation of 5-methyluridine at position 54 (m5U54) in all tRNAs, and that of position 341 (m5U341) in tmRNA (transfer-mRNA). This chain is tRNA/tmRNA (uracil-C(5))-methyltransferase, found in Pseudomonas fluorescens (strain Pf0-1).